The sequence spans 545 residues: Probable quinate permease (545 aa).

Topologically, residues 1–22 are cytoplasmic; it reads MSILSLVEDRPTPKEVYNWRIY. The helical transmembrane segment at 23–43 threads the bilayer; the sequence is LLAAVASFTSCMIGYDSAFIG. Residues 44-66 lie on the Extracellular side of the membrane; that stretch reads TTISLQSFKDEFNWDAMSTDKQN. A helical membrane pass occupies residues 67 to 87; sequence LISANIVSLYQAGAFFGAFFA. Over 88–97 the chain is Cytoplasmic; it reads YPMGHFWGRR. Residues 98–118 traverse the membrane as a helical segment; the sequence is WGLFVAALVFTLGAGLMLGAN. The Extracellular segment spans residues 119–130; it reads GDRGLGLIYGGR. Residues 131 to 151 traverse the membrane as a helical segment; sequence VLAGLGVGAGSNITPIYISEL. Residues 152–159 are Cytoplasmic-facing; it reads APPAIRGR. Residues 160-180 traverse the membrane as a helical segment; sequence LVGVYELGWQIGGLVGFWICF. At 181 to 193 the chain is on the extracellular side; the sequence is GVDDTLAPSHKQW. A helical transmembrane segment spans residues 194-214; the sequence is IIPFAVQLIPSGLLLLGILFV. Residues 215–285 are Cytoplasmic-facing; the sequence is RESPRWLFLR…VWSNKRIMYR (71 aa). Residues 286-306 traverse the membrane as a helical segment; that stretch reads LFLGSMLFLWQNGSGINAINY. The Extracellular segment spans residues 307 to 325; that stretch reads YSPTVFKSIGLRGANTSLL. A helical membrane pass occupies residues 326–346; it reads TTGIFGVVKTVVTFVWLLWLI. At 347-352 the chain is on the cytoplasmic side; it reads DRLGRR. The chain crosses the membrane as a helical span at residues 353-373; it reads LLLMIGAAGGSVCLWIVGAYI. Residues 374–384 lie on the Extracellular side of the membrane; the sequence is KVAKPTERDPD. Residues 385–405 form a helical membrane-spanning segment; sequence APLDGGGIAAMFFFYLWTVFY. Over 406-457 the chain is Cytoplasmic; it reads TPSWNGTPWVMNSEMFDPNVRSLAQACAAGSNWLWNFLISRFTPQMFAKMEY. Residues 458–478 form a helical membrane-spanning segment; it reads GVYFFFASLMILSIVFVFFLI. Over 479–545 the chain is Extracellular; it reads PETKGIPLES…VEQAESVPKA (67 aa). The disordered stretch occupies residues 520–545; the sequence is IEESGYTKSDAQQVERVEQAESVPKA.

Belongs to the major facilitator superfamily. Sugar transporter (TC 2.A.1.1) family. As to quaternary structure, interacts with creB. Ubiquitinated. Deubiquitinated by creB, probably to control its activity or amount.

Its subcellular location is the cell membrane. Integral membrane transporter that imports quinic acid to be catabolized as a carbon source. The chain is Probable quinate permease (qutD) from Aspergillus terreus (strain NIH 2624 / FGSC A1156).